The following is a 173-amino-acid chain: Myeloid-derived growth factor (173 aa).

The signal sequence occupies residues 1-31 (MAAPSGGWNGVGASLWAALLLGAVALRPAEA).

The protein belongs to the MYDGF family. Expressed in eosinophils (at protein level). Expressed in bone marrow cells. Expressed in synovial tissue. Found in synovial fluid of patients with arthropaties.

The protein localises to the secreted. It is found in the endoplasmic reticulum-Golgi intermediate compartment. The protein resides in the endoplasmic reticulum. It localises to the golgi apparatus. Functionally, bone marrow-derived monocyte and paracrine-acting protein that promotes cardiac myocyte survival and adaptive angiogenesis for cardiac protection and/or repair after myocardial infarction (MI). Stimulates endothelial cell proliferation through a MAPK1/3-, STAT3- and CCND1-mediated signaling pathway. Inhibits cardiac myocyte apoptosis in a PI3K/AKT-dependent signaling pathway. Involved in endothelial cell proliferation and angiogenesis. The protein is Myeloid-derived growth factor of Homo sapiens (Human).